The chain runs to 647 residues: DNA topoisomerase 3 (647 aa).

The Toprim domain occupies 2–135 (TRLFIAEKPS…KKETVQRLLI (134 aa)). Residues glutamate 8, aspartate 104, and aspartate 106 each contribute to the Mg(2+) site. Residues 156-608 (FIPLSVSALA…TLQGRLEQLI (453 aa)) enclose the Topo IA-type catalytic domain. Residues 195 to 200 (SVGRVQ) are interaction with DNA. Catalysis depends on tyrosine 332, which acts as the O-(5'-phospho-DNA)-tyrosine intermediate.

The protein belongs to the type IA topoisomerase family. It depends on Mg(2+) as a cofactor.

It carries out the reaction ATP-independent breakage of single-stranded DNA, followed by passage and rejoining.. Its function is as follows. Releases the supercoiling and torsional tension of DNA, which is introduced during the DNA replication and transcription, by transiently cleaving and rejoining one strand of the DNA duplex. Introduces a single-strand break via transesterification at a target site in duplex DNA. The scissile phosphodiester is attacked by the catalytic tyrosine of the enzyme, resulting in the formation of a DNA-(5'-phosphotyrosyl)-enzyme intermediate and the expulsion of a 3'-OH DNA strand. The free DNA strand then undergoes passage around the unbroken strand, thus removing DNA supercoils. Finally, in the religation step, the DNA 3'-OH attacks the covalent intermediate to expel the active-site tyrosine and restore the DNA phosphodiester backbone. The chain is DNA topoisomerase 3 from Vibrio cholerae serotype O1 (strain ATCC 39315 / El Tor Inaba N16961).